A 307-amino-acid polypeptide reads, in one-letter code: Pyridoxal 5'-phosphate synthase subunit PdxS (307 aa).

Aspartate 37 provides a ligand contact to D-ribose 5-phosphate. Lysine 94 functions as the Schiff-base intermediate with D-ribose 5-phosphate in the catalytic mechanism. Residue glycine 166 coordinates D-ribose 5-phosphate. A D-glyceraldehyde 3-phosphate-binding site is contributed by arginine 178. D-ribose 5-phosphate is bound by residues glycine 227 and 248 to 249; that span reads GS.

This sequence belongs to the PdxS/SNZ family. In the presence of PdxT, forms a dodecamer of heterodimers.

The enzyme catalyses aldehydo-D-ribose 5-phosphate + D-glyceraldehyde 3-phosphate + L-glutamine = pyridoxal 5'-phosphate + L-glutamate + phosphate + 3 H2O + H(+). The protein operates within cofactor biosynthesis; pyridoxal 5'-phosphate biosynthesis. Functionally, catalyzes the formation of pyridoxal 5'-phosphate from ribose 5-phosphate (RBP), glyceraldehyde 3-phosphate (G3P) and ammonia. The ammonia is provided by the PdxT subunit. Can also use ribulose 5-phosphate and dihydroxyacetone phosphate as substrates, resulting from enzyme-catalyzed isomerization of RBP and G3P, respectively. The protein is Pyridoxal 5'-phosphate synthase subunit PdxS of Mycobacterium leprae (strain Br4923).